Reading from the N-terminus, the 137-residue chain is Large ribosomal subunit protein uL16 (137 aa).

The protein belongs to the universal ribosomal protein uL16 family. Part of the 50S ribosomal subunit.

Functionally, binds 23S rRNA and is also seen to make contacts with the A and possibly P site tRNAs. The protein is Large ribosomal subunit protein uL16 of Acinetobacter baylyi (strain ATCC 33305 / BD413 / ADP1).